The chain runs to 403 residues: MYLTKEEEKILDGEYGEVLRRCMNLLVSLGDIYGADKLIPISSAQISGVSYKTIKDIGLEFLEDFAKEDVKVKVYATLNPAGMDLDIWRELGIDEKFAKKQLRIIEAFKKMEVEISCTCTPYLTGNLPRFGEHISWAESSAVSFANSVLGAKTNREGGPSALAAAIIGKTPYYGYHLDENRKTTHIIELDGQLISNFKYGESFYGALGYLVGKIVKNGIPYFENLYKLNPNNDNLKSLGAAMAASGGIALYHAKNLTAECRVKEVVNDKIEKISIGVEEIKEAYEKLNTTNEEPDLICIGCPHCSLMEIKKIAELLKNKKLNADLWVCCSLHIKAIADRMGYTKIIEKAGGKVVKDTCMVVSPIEDLGYKRVATNSGKAAVYLPSFCKSEVIFGDIEELLKGR.

Residues Gly-48, Val-49, Ser-50, Asn-79, and Pro-80 each coordinate (R)-5-phosphomevalonate. Cys-119 provides a ligand contact to [4Fe-4S] cluster. (R)-5-phosphomevalonate-binding residues include Glu-138 and Ser-139. [4Fe-4S] cluster is bound by residues Cys-301 and Cys-358. (R)-5-phosphomevalonate is bound at residue Lys-378.

It belongs to the AcnX type II large subunit family. Heterodimer composed of a large subunit (PMDh-L) and a small subunit (PMDh-S). The cofactor is [4Fe-4S] cluster.

It catalyses the reaction (R)-5-phosphomevalonate = (2E)-3-methyl-5-phosphooxypent-2-enoate + H2O. Its pathway is isoprenoid biosynthesis; isopentenyl diphosphate biosynthesis via mevalonate pathway. Functionally, component of a hydro-lyase that catalyzes the dehydration of mevalonate 5-phosphate (MVA5P) to form trans-anhydromevalonate 5-phosphate (tAHMP). Involved in the archaeal mevalonate (MVA) pathway, which provides fundamental precursors for isoprenoid biosynthesis, such as isopentenyl diphosphate (IPP) and dimethylallyl diphosphate (DMAPP). In Methanocaldococcus jannaschii (strain ATCC 43067 / DSM 2661 / JAL-1 / JCM 10045 / NBRC 100440) (Methanococcus jannaschii), this protein is Phosphomevalonate dehydratase large subunit.